The primary structure comprises 525 residues: MTDTTIRARGAQAAGSPAGAGPLDAPDGAPRAACLELDGITVTFPGVRALDAVSLSVRAGEVHGLMGENGAGKSTLLKVLSGVNQPQAGTLRLNGLAQRFGSTRAALEAGIAIIYQELHLVPELTVAENLMLGQLPNRAGVLDERALVARATAELERLGERIDPNTPVKLLSIGQRQMIEIGKALMRDARVIAFDEPTSSLSARETERLFRIIHALRADGRAIIYVTHRMEEVDALCDRVTVFRDGRRIETFESVADLDRDRLIGCMVGRPIADVYGYRPREPGDVAIEAKGLRGPGLAEPVSFSARRGEIVGFFGLVGAGRSELMKLLYGAARPSAGHVELNGRRVSFASPRDAVRAGIALCPEDRKQEGIVAIASVADNLNLSARRHFSPARLLLDARRERELAARYIARLAIKTRDADTPIGALSGGNQQKVILARWLAERIDVFLMDEPTRGIDVGARAEIYNLFYELADAGRTVLIVSSDLAEVIGVSDRIVVMKQGRIAGCVAKAQASPDALIKLALPR.

Residues 1–25 (MTDTTIRARGAQAAGSPAGAGPLDA) are disordered. Residues 7–25 (RARGAQAAGSPAGAGPLDA) are compositionally biased toward low complexity. 2 ABC transporter domains span residues 35–270 (LELD…MVGR) and 281–524 (REPG…LALP). An ATP-binding site is contributed by 67 to 74 (GENGAGKS).

The protein belongs to the ABC transporter superfamily. Arabinose importer (TC 3.A.1.2.2) family. In terms of assembly, the complex is composed of two ATP-binding proteins (AraG), two transmembrane proteins (AraH) and a solute-binding protein (AraF).

The protein localises to the cell inner membrane. The catalysed reaction is L-arabinose(out) + ATP + H2O = L-arabinose(in) + ADP + phosphate + H(+). Functionally, part of the ABC transporter complex AraFGH involved in arabinose import. Responsible for energy coupling to the transport system. The chain is Arabinose import ATP-binding protein AraG 2 from Burkholderia thailandensis (strain ATCC 700388 / DSM 13276 / CCUG 48851 / CIP 106301 / E264).